The primary structure comprises 605 residues: Dihydrogeodin oxidase (605 aa).

A signal peptide spans 1–18; the sequence is MPSLKDWVVAGLVPMTIA. N-linked (GlcNAc...) asparagine glycans are attached at residues asparagine 27, asparagine 107, and asparagine 112. Plastocyanin-like domains are found at residues 65–183, 189–347, and 424–567; these read TVTQ…GPSS, DLGP…YDES, and YVDW…KIKP. Cu cation is bound by residues histidine 117, histidine 119, histidine 161, and histidine 163. Residues asparagine 278 and asparagine 467 are each glycosylated (N-linked (GlcNAc...) asparagine). Cu cation contacts are provided by histidine 484, histidine 487, histidine 489, histidine 543, cysteine 544, histidine 545, and histidine 549.

The protein belongs to the multicopper oxidase family. It depends on Cu cation as a cofactor.

It carries out the reaction 2 dihydrogeodin + O2 + 2 H(+) = 2 (+)-geodin + 2 H2O. Its pathway is secondary metabolite biosynthesis. Its function is as follows. Dihydrogeodin oxidase; part of the gene cluster that mediates the biosynthesis of geodin, an intermediate in the biosynthesis of other natural products. The pathway begins with the synthesis of atrochrysone thioester by the polyketide synthase (PKS) gedC. The atrochrysone carboxyl ACP thioesterase gedB then breaks the thioester bond and releases the atrochrysone carboxylic acid from gedC. The atrochrysone carboxylic acid is then converted to atrochrysone which is further transformed into emodinanthrone. The next step is performed by the emodinanthrone oxygenase gedH that catalyzes the oxidation of emodinanthrone to emodin. Emodin O-methyltransferase encoded probably by gedA then catalyzes methylation of the 8-hydroxy group of emodin to form questin. Ring cleavage of questin by questin oxidase gedK leads to desmethylsulochrin via several intermediates including questin epoxide. Another methylation step probably catalyzed by methyltransferase gedG leads to the formation of sulochrin which is further converted to dihydrogeodin by the sulochrin halogenase gedL. Finally, the dihydrogeodin oxidase gedJ catalyzes the stereospecific phenol oxidative coupling reaction converting dihydrogeodin to geodin. The chain is Dihydrogeodin oxidase from Aspergillus terreus (strain NIH 2624 / FGSC A1156).